The sequence spans 405 residues: S-arrestin (405 aa).

At threonine 234 the chain carries Phosphothreonine.

It belongs to the arrestin family. In terms of assembly, monomer. Homodimer. Homotetramer. Interacts with RHO (via the phosphorylated C-terminus). In terms of tissue distribution, detected in retina, in the proximal portion of the outer segment of rod photoreceptor cells (at protein level).

Its subcellular location is the cell projection. It localises to the cilium. The protein resides in the photoreceptor outer segment. The protein localises to the membrane. Binds to photoactivated, phosphorylated RHO and terminates RHO signaling via G-proteins by competing with G-proteins for the same binding site on RHO. May play a role in preventing light-dependent degeneration of retinal photoreceptor cells. The chain is S-arrestin (SAG) from Homo sapiens (Human).